Reading from the N-terminus, the 301-residue chain is 4-hydroxybenzoate octaprenyltransferase (301 aa).

The next 7 helical transmembrane spans lie at 34-54 (IGSLLLLWPTWWALWLAAGGL), 57-77 (LWTLFVFTAGVWLTRSAGCVI), 108-128 (LWVFVVLMLVAFALVLSLNWL), 163-183 (WGIPMGFAAVQGSVPLLAWLL), 222-242 (DLIAQGVLYALMFAALVLVGL), 248-268 (IAYWAGLGIAALLVAYEFHIA), and 280-300 (FLHNNWVGLAIFVGIAASLAL).

The protein belongs to the UbiA prenyltransferase family. Mg(2+) serves as cofactor.

It localises to the cell inner membrane. It catalyses the reaction all-trans-octaprenyl diphosphate + 4-hydroxybenzoate = 4-hydroxy-3-(all-trans-octaprenyl)benzoate + diphosphate. The protein operates within cofactor biosynthesis; ubiquinone biosynthesis. Functionally, catalyzes the prenylation of para-hydroxybenzoate (PHB) with an all-trans polyprenyl group. Mediates the second step in the final reaction sequence of ubiquinone-8 (UQ-8) biosynthesis, which is the condensation of the polyisoprenoid side chain with PHB, generating the first membrane-bound Q intermediate 3-octaprenyl-4-hydroxybenzoate. In Xanthomonas campestris pv. campestris (strain 8004), this protein is 4-hydroxybenzoate octaprenyltransferase.